The primary structure comprises 212 residues: Glutathione S-transferase (212 aa).

Positions methionine 1–glycine 82 constitute a GST N-terminal domain. Residues serine 11, proline 12–alanine 13, histidine 40–lysine 41, glutamine 53–valine 54, and glutamate 66–serine 67 contribute to the glutathione site. The 124-residue stretch at aspartate 89 to glutamine 212 folds into the GST C-terminal domain.

Belongs to the GST superfamily. Phi family.

The catalysed reaction is RX + glutathione = an S-substituted glutathione + a halide anion + H(+). Its function is as follows. Conjugation of reduced glutathione to a wide number of exogenous and endogenous hydrophobic electrophiles. The polypeptide is Glutathione S-transferase (Hyoscyamus muticus (Egyptian henbane)).